Here is a 203-residue protein sequence, read N- to C-terminus: Ribosomal RNA large subunit methyltransferase E (203 aa).

The S-adenosyl-L-methionine site is built by Gly-60, Trp-62, Asp-79, Asp-95, and Asp-119. Lys-159 (proton acceptor) is an active-site residue.

This sequence belongs to the class I-like SAM-binding methyltransferase superfamily. RNA methyltransferase RlmE family.

The protein localises to the cytoplasm. It catalyses the reaction uridine(2552) in 23S rRNA + S-adenosyl-L-methionine = 2'-O-methyluridine(2552) in 23S rRNA + S-adenosyl-L-homocysteine + H(+). Specifically methylates the uridine in position 2552 of 23S rRNA at the 2'-O position of the ribose in the fully assembled 50S ribosomal subunit. In Pelagibacter ubique (strain HTCC1062), this protein is Ribosomal RNA large subunit methyltransferase E.